The sequence spans 480 residues: Sulfate adenylyltransferase subunit 1 (480 aa).

Residues 30–248 form the tr-type G domain; it reads KGLLRFLTCG…TVDVKKEASK (219 aa). The G1 stretch occupies residues 39 to 46; it reads GSVDDGKS. GTP is bound at residue 39–46; that stretch reads GSVDDGKS. A G2 region spans residues 97-101; that stretch reads GITID. The G3 stretch occupies residues 118 to 121; it reads DTPG. GTP contacts are provided by residues 118 to 122 and 173 to 176; these read DTPGH and NKMD. The G4 stretch occupies residues 173-176; that stretch reads NKMD. The tract at residues 211 to 213 is G5; the sequence is SAL.

This sequence belongs to the TRAFAC class translation factor GTPase superfamily. Classic translation factor GTPase family. CysN/NodQ subfamily. As to quaternary structure, heterodimer composed of CysD, the smaller subunit, and CysN.

It carries out the reaction sulfate + ATP + H(+) = adenosine 5'-phosphosulfate + diphosphate. It participates in sulfur metabolism; hydrogen sulfide biosynthesis; sulfite from sulfate: step 1/3. With CysD forms the ATP sulfurylase (ATPS) that catalyzes the adenylation of sulfate producing adenosine 5'-phosphosulfate (APS) and diphosphate, the first enzymatic step in sulfur assimilation pathway. APS synthesis involves the formation of a high-energy phosphoric-sulfuric acid anhydride bond driven by GTP hydrolysis by CysN coupled to ATP hydrolysis by CysD. This chain is Sulfate adenylyltransferase subunit 1, found in Photorhabdus laumondii subsp. laumondii (strain DSM 15139 / CIP 105565 / TT01) (Photorhabdus luminescens subsp. laumondii).